The primary structure comprises 433 residues: 23S rRNA (uracil(1939)-C(5))-methyltransferase RlmD (433 aa).

Residues 10 to 68 enclose the TRAM domain; the sequence is RTTTRQIITVSVNDLDSFGQGVARHNGKTLFIPGLLPQENAEVTVTEDKKQYARAKVVR. Residues C81, C87, C90, and C162 each coordinate [4Fe-4S] cluster. The S-adenosyl-L-methionine site is built by Q265, F294, N299, E315, N342, and D363. Residue C389 is the Nucleophile of the active site.

It belongs to the class I-like SAM-binding methyltransferase superfamily. RNA M5U methyltransferase family. RlmD subfamily.

The catalysed reaction is uridine(1939) in 23S rRNA + S-adenosyl-L-methionine = 5-methyluridine(1939) in 23S rRNA + S-adenosyl-L-homocysteine + H(+). Its function is as follows. Catalyzes the formation of 5-methyl-uridine at position 1939 (m5U1939) in 23S rRNA. This is 23S rRNA (uracil(1939)-C(5))-methyltransferase RlmD from Escherichia coli O157:H7.